The chain runs to 161 residues: Regulator of ribonuclease activity A (161 aa).

This sequence belongs to the RraA family. In terms of assembly, homotrimer. Binds to both RNA-binding sites in the C-terminal region of Rne and to RhlB.

Its subcellular location is the cytoplasm. Functionally, globally modulates RNA abundance by binding to RNase E (Rne) and regulating its endonucleolytic activity. Can modulate Rne action in a substrate-dependent manner by altering the composition of the degradosome. Modulates RNA-binding and helicase activities of the degradosome. The polypeptide is Regulator of ribonuclease activity A (Erwinia tasmaniensis (strain DSM 17950 / CFBP 7177 / CIP 109463 / NCPPB 4357 / Et1/99)).